A 299-amino-acid polypeptide reads, in one-letter code: Porphobilinogen deaminase (299 aa).

Cysteine 242 bears the S-(dipyrrolylmethanemethyl)cysteine mark.

This sequence belongs to the HMBS family. In terms of assembly, monomer. Dipyrromethane is required as a cofactor.

The enzyme catalyses 4 porphobilinogen + H2O = hydroxymethylbilane + 4 NH4(+). It functions in the pathway porphyrin-containing compound metabolism; protoporphyrin-IX biosynthesis; coproporphyrinogen-III from 5-aminolevulinate: step 2/4. Functionally, tetrapolymerization of the monopyrrole PBG into the hydroxymethylbilane pre-uroporphyrinogen in several discrete steps. The chain is Porphobilinogen deaminase from Rickettsia typhi (strain ATCC VR-144 / Wilmington).